The primary structure comprises 389 residues: Alkanesulfonate monooxygenase (389 aa).

The protein belongs to the SsuD family.

The catalysed reaction is an alkanesulfonate + FMNH2 + O2 = an aldehyde + FMN + sulfite + H2O + 2 H(+). In terms of biological role, catalyzes the desulfonation of aliphatic sulfonates. In Rhizobium etli (strain CIAT 652), this protein is Alkanesulfonate monooxygenase.